Consider the following 410-residue polypeptide: Argininosuccinate synthase (410 aa).

6 to 14 (AYSGGLDTS) provides a ligand contact to ATP. Tyrosine 84 contacts L-citrulline. Glycine 114 is a binding site for ATP. L-aspartate-binding residues include threonine 116, asparagine 120, and aspartate 121. Asparagine 120 provides a ligand contact to L-citrulline. Positions 124, 169, 178, 254, and 266 each coordinate L-citrulline.

Belongs to the argininosuccinate synthase family. Type 1 subfamily. As to quaternary structure, homotetramer.

It is found in the cytoplasm. It carries out the reaction L-citrulline + L-aspartate + ATP = 2-(N(omega)-L-arginino)succinate + AMP + diphosphate + H(+). Its pathway is amino-acid biosynthesis; L-arginine biosynthesis; L-arginine from L-ornithine and carbamoyl phosphate: step 2/3. The polypeptide is Argininosuccinate synthase (Pyrococcus furiosus (strain ATCC 43587 / DSM 3638 / JCM 8422 / Vc1)).